The chain runs to 443 residues: ATP-dependent protease ATPase subunit HslU (443 aa).

Residues I18, G60–E65, D256, E321, and R393 each bind ATP.

The protein belongs to the ClpX chaperone family. HslU subfamily. As to quaternary structure, a double ring-shaped homohexamer of HslV is capped on each side by a ring-shaped HslU homohexamer. The assembly of the HslU/HslV complex is dependent on binding of ATP.

It is found in the cytoplasm. Functionally, ATPase subunit of a proteasome-like degradation complex; this subunit has chaperone activity. The binding of ATP and its subsequent hydrolysis by HslU are essential for unfolding of protein substrates subsequently hydrolyzed by HslV. HslU recognizes the N-terminal part of its protein substrates and unfolds these before they are guided to HslV for hydrolysis. The protein is ATP-dependent protease ATPase subunit HslU of Histophilus somni (strain 2336) (Haemophilus somnus).